Here is a 430-residue protein sequence, read N- to C-terminus: Cytochrome c biogenesis protein CcsB (430 aa).

Transmembrane regions (helical) follow at residues Leu14–Ile34, Ser72–Arg92, and Ala162–Ser182.

Belongs to the Ccs1/CcsB family. In terms of assembly, may interact with CcsA.

The protein localises to the cellular thylakoid membrane. In terms of biological role, required during biogenesis of c-type cytochromes (cytochrome c6 and cytochrome f) at the step of heme attachment. The protein is Cytochrome c biogenesis protein CcsB of Prochlorococcus marinus (strain MIT 9313).